We begin with the raw amino-acid sequence, 322 residues long: Ig gamma-2A chain C region (322 aa).

3 consecutive Ig-like domains span residues 6–98 (PSVY…KKIV), 115–212 (VFIF…KSIS), and 221–317 (PQVY…KSLS). Disulfide bonds link Cys-27–Cys-82, Cys-136–Cys-196, and Cys-242–Cys-300. N-linked (GlcNAc...) asparagine glycosylation is present at Asn-172.

The polypeptide is Ig gamma-2A chain C region (Igg-2a) (Rattus norvegicus (Rat)).